The primary structure comprises 309 residues: tRNA dimethylallyltransferase (309 aa).

10 to 17 (GPTAVGKT) provides a ligand contact to ATP. 12-17 (TAVGKT) serves as a coordination point for substrate. Residues 35–38 (DSMQ) are interaction with substrate tRNA.

This sequence belongs to the IPP transferase family. As to quaternary structure, monomer. Mg(2+) is required as a cofactor.

It carries out the reaction adenosine(37) in tRNA + dimethylallyl diphosphate = N(6)-dimethylallyladenosine(37) in tRNA + diphosphate. Functionally, catalyzes the transfer of a dimethylallyl group onto the adenine at position 37 in tRNAs that read codons beginning with uridine, leading to the formation of N6-(dimethylallyl)adenosine (i(6)A). This chain is tRNA dimethylallyltransferase, found in Clostridium botulinum (strain Alaska E43 / Type E3).